Here is a 106-residue protein sequence, read N- to C-terminus: Protein Rev (106 aa).

The segment at 8 to 16 (LIKFLYQSN) is homomultimerization. Residues 14-39 (QSNPPPKPEGTRQARRNRRRRWRERQ) form a disordered region. The Nuclear localization signal and RNA-binding (RRE) signature appears at 24–40 (TRQARRNRRRRWRERQR). The span at 26–37 (QARRNRRRRWRE) shows a compositional bias: basic residues. The Nuclear export signal and binding to XPO1 signature appears at 63 to 74 (LQLPPLERLTLD). Residues S82 and S89 each carry the phosphoserine; by host modification. The disordered stretch occupies residues 82–106 (SGTQGVGSPQILVESPTVLESGTKE).

Belongs to the HIV-1 REV protein family. Homomultimer; when bound to the RRE. Multimeric assembly is essential for activity and may involve XPO1. Binds to human KPNB1, XPO1, TNPO1, RANBP5 and IPO7. Interacts with the viral Integrase. Interacts with human KHDRBS1. Interacts with human NAP1; this interaction decreases Rev multimerization and stimulates its activity. Interacts with human DEAD-box helicases DDX3 and DDX24; these interactions may serve for viral RNA export to the cytoplasm and packaging, respectively. Interacts with human PSIP1; this interaction may inhibit HIV-1 DNA integration by promoting dissociation of the Integrase-LEDGF/p75 complex. In terms of processing, asymmetrically arginine dimethylated at one site by host PRMT6. Methylation impairs the RNA-binding activity and export of viral RNA from the nucleus to the cytoplasm. Phosphorylated by protein kinase CK2. Presence of, and maybe binding to the N-terminus of the regulatory beta subunit of CK2 is necessary for CK2-mediated Rev's phosphorylation.

It localises to the host nucleus. The protein localises to the host nucleolus. The protein resides in the host cytoplasm. Escorts unspliced or incompletely spliced viral pre-mRNAs (late transcripts) out of the nucleus of infected cells. These pre-mRNAs carry a recognition sequence called Rev responsive element (RRE) located in the env gene, that is not present in fully spliced viral mRNAs (early transcripts). This function is essential since most viral proteins are translated from unspliced or partially spliced pre-mRNAs which cannot exit the nucleus by the pathway used by fully processed cellular mRNAs. Rev itself is translated from a fully spliced mRNA that readily exits the nucleus. Rev's nuclear localization signal (NLS) binds directly to KPNB1/Importin beta-1 without previous binding to KPNA1/Importin alpha-1. KPNB1 binds to the GDP bound form of RAN (Ran-GDP) and targets Rev to the nucleus. In the nucleus, the conversion from Ran-GDP to Ran-GTP dissociates Rev from KPNB1 and allows Rev's binding to the RRE in viral pre-mRNAs. Rev multimerization on the RRE via cooperative assembly exposes its nuclear export signal (NES) to the surface. Rev can then form a complex with XPO1/CRM1 and Ran-GTP, leading to nuclear export of the complex. Conversion from Ran-GTP to Ran-GDP mediates dissociation of the Rev/RRE/XPO1/RAN complex, so that Rev can return to the nucleus for a subsequent round of export. Beside KPNB1, also seems to interact with TNPO1/Transportin-1, RANBP5/IPO5 and IPO7/RANBP7 for nuclear import. The nucleoporin-like HRB/RIP is an essential cofactor that probably indirectly interacts with Rev to release HIV RNAs from the perinuclear region to the cytoplasm. This is Protein Rev from Homo sapiens (Human).